The sequence spans 88 residues: CRISPR-associated endoribonuclease Cas2 3 (88 aa).

Position 9 (D9) interacts with Mg(2+).

It belongs to the CRISPR-associated endoribonuclease Cas2 protein family. In terms of assembly, homodimer, forms a heterotetramer with a Cas1 homodimer. The cofactor is Mg(2+).

Functionally, CRISPR (clustered regularly interspaced short palindromic repeat), is an adaptive immune system that provides protection against mobile genetic elements (viruses, transposable elements and conjugative plasmids). CRISPR clusters contain sequences complementary to antecedent mobile elements and target invading nucleic acids. CRISPR clusters are transcribed and processed into CRISPR RNA (crRNA). Functions as a ssRNA-specific endoribonuclease. Involved in the integration of spacer DNA into the CRISPR cassette. This chain is CRISPR-associated endoribonuclease Cas2 3, found in Thermodesulfovibrio yellowstonii (strain ATCC 51303 / DSM 11347 / YP87).